A 552-amino-acid chain; its full sequence is L-ascorbate oxidase (552 aa).

Plastocyanin-like domains follow at residues Ser1–Asp122 and Asp134–Pro300. Intrachain disulfides connect Cys19/Cys201, Cys81/Cys538, and Cys180/Cys193. Residues His60 and His62 each contribute to the Cu cation site. The N-linked (GlcNAc...) asparagine glycan is linked to Asn92. The Cu cation site is built by His104 and His106. N-linked (GlcNAc...) asparagine glycosylation is found at Asn325 and Asn440. The 180-residue stretch at Asn344–Glu523 folds into the Plastocyanin-like 3 domain. The Cu cation site is built by His445, His448, His450, His506, Cys507, His508, His512, and Met517.

Belongs to the multicopper oxidase family. Dimer. The cofactor is Cu cation.

The protein localises to the secreted. It carries out the reaction 4 L-ascorbate + O2 = 4 monodehydro-L-ascorbate radical + 2 H2O. Its function is as follows. May be involved in a redox system involving ascorbic acid. The protein is L-ascorbate oxidase of Cucurbita pepo var. melopepo (Zucchini).